We begin with the raw amino-acid sequence, 439 residues long: Lipid-A-disaccharide synthase (439 aa).

Residues 1 to 35 (MKEIGNRESGIVDGQRNGASVGSDPTALPIPHSPL) form a disordered region.

It belongs to the LpxB family.

It catalyses the reaction a lipid X + a UDP-2-N,3-O-bis[(3R)-3-hydroxyacyl]-alpha-D-glucosamine = a lipid A disaccharide + UDP + H(+). It participates in bacterial outer membrane biogenesis; LPS lipid A biosynthesis. Condensation of UDP-2,3-diacylglucosamine and 2,3-diacylglucosamine-1-phosphate to form lipid A disaccharide, a precursor of lipid A, a phosphorylated glycolipid that anchors the lipopolysaccharide to the outer membrane of the cell. The protein is Lipid-A-disaccharide synthase of Xanthomonas euvesicatoria pv. vesicatoria (strain 85-10) (Xanthomonas campestris pv. vesicatoria).